Here is a 541-residue protein sequence, read N- to C-terminus: Membrane protein insertase YidC (541 aa).

5 helical membrane passes run 7–27 (LLFMALLFISFLIYQQWQVDY), 345–365 (LVQNWGLAIIGVTLVVKAILY), 415–435 (LGGCLPILLQMPIFIALYWTF), 453–473 (LSAQDPYFILPILMGASMFLL), and 492–512 (FMPLIFMVFFLFFPAGLVLYW).

This sequence belongs to the OXA1/ALB3/YidC family. Type 1 subfamily. As to quaternary structure, interacts with the Sec translocase complex via SecD. Specifically interacts with transmembrane segments of nascent integral membrane proteins during membrane integration.

It localises to the cell inner membrane. Functionally, required for the insertion and/or proper folding and/or complex formation of integral membrane proteins into the membrane. Involved in integration of membrane proteins that insert both dependently and independently of the Sec translocase complex, as well as at least some lipoproteins. Aids folding of multispanning membrane proteins. In Histophilus somni (strain 129Pt) (Haemophilus somnus), this protein is Membrane protein insertase YidC.